The following is a 145-amino-acid chain: 3-hydroxyacyl-[acyl-carrier-protein] dehydratase FabZ (145 aa).

Histidine 47 is a catalytic residue.

It belongs to the thioester dehydratase family. FabZ subfamily.

The protein localises to the cytoplasm. It catalyses the reaction a (3R)-hydroxyacyl-[ACP] = a (2E)-enoyl-[ACP] + H2O. Involved in unsaturated fatty acids biosynthesis. Catalyzes the dehydration of short chain beta-hydroxyacyl-ACPs and long chain saturated and unsaturated beta-hydroxyacyl-ACPs. This is 3-hydroxyacyl-[acyl-carrier-protein] dehydratase FabZ from Acidovorax sp. (strain JS42).